Consider the following 1306-residue polypeptide: Activating transcription factor 7-interacting protein 1 (1306 aa).

Position 1 is an N-acetylmethionine (methionine 1). A disordered region spans residues 1–23; the sequence is MDSVEEPQKKVFKARKTMRASDR. Lysine 33 is covalently cross-linked (Glycyl lysine isopeptide (Lys-Gly) (interchain with G-Cter in SUMO2)). Phosphoserine is present on residues serine 57 and serine 112. Disordered regions lie at residues 104–470, 496–604, 689–722, 765–785, 871–895, 920–1060, and 1152–1196; these read EDLN…SMET, LPVE…SKRR, AAKD…NNMT, VVSS…PAAP, PLPN…NSST, RTSL…GPSQ, and AGPQ…STSL. 2 stretches are compositionally biased toward polar residues: residues 109–134 and 143–162; these read EALS…SPAS and VSDN…SDNP. Threonine 124 bears the Phosphothreonine mark. Low complexity-rich tracts occupy residues 185-212, 246-261, and 284-303; these read EEPP…CSEP, EAAS…ASDE, and PSGD…LPRS. The segment covering 432–441 has biased composition (basic and acidic residues); that stretch reads QSEKDEHKSP. Phosphoserine is present on residues serine 511, serine 514, serine 516, and serine 533. Residues 513–523 show a composition bias toward polar residues; the sequence is GSPSKQESSEN. Composition is skewed to basic and acidic residues over residues 557–566, 592–601, and 689–699; these read EGEKSEKDGK, KSEDMDSVES, and AAKDDLKKRQE. Positions 587–605 match the Nuclear localization signal motif; the sequence is RRKRSKSEDMDSVESKRRR. A Glycyl lysine isopeptide (Lys-Gly) (interchain with G-Cter in SUMO2) cross-link involves residue lysine 592. Serine 593 carries the post-translational modification Phosphoserine. Residues 596–851 form an interaction with SETDB1 region; it reads MDSVESKRRR…NQPSGNVEFI (256 aa). Residues 666–696 adopt a coiled-coil conformation; the sequence is NKRHKAVLTELQAKIARLTKRFGAAKDDLKK. A phosphoserine mark is found at serine 700 and serine 707. The span at 713–722 shows a compositional bias: polar residues; it reads NDTNSNNNMT. The span at 871–884 shows a compositional bias: pro residues; that stretch reads PLPNPTKPNIPSVP. Serine 933 is subject to Phosphoserine. Glycyl lysine isopeptide (Lys-Gly) (interchain with G-Cter in SUMO2) cross-links involve residues lysine 944 and lysine 974. Over residues 948 to 981 the composition is skewed to polar residues; sequence STFSPPSSAEQNSSATPRIVTENQTNKTVDSSIN. A compositionally biased stretch (low complexity) spans 987–1000; that stretch reads STSQSGKASSSDSS. The segment at 1001 to 1011 is interaction with SUMO; sequence GVIDLTMDDEE. The span at 1022–1040 shows a compositional bias: low complexity; that stretch reads SPPSSSTVSTSQPMSRPLQ. Residues 1054-1143 enclose the Fibronectin type-III 1 domain; that stretch reads PTSGPSQATI…RVPQTTTYVV (90 aa). The segment covering 1170–1187 has biased composition (pro residues); it reads PRPLHPAPLPEAPQPQRL. Positions 1190 to 1306 are interaction with MBD1; it reads EAASTSLPQK…TDVISSSQNS (117 aa). The 107-residue stretch at 1196 to 1302 folds into the Fibronectin type-III 2 domain; that stretch reads LPQKPHLKLA…DPQSTDVISS (107 aa).

The protein belongs to the MCAF family. In terms of assembly, interacts with MBD1; the interaction is enhanced when MBD1 is sumoylated. Interacts with SETDB1; the interaction protects SETDB1 from proteasomal degradation and is required to stimulate histone methyltransferase activity and facilitate the conversion of dimethylated to trimethylated H3 'Lys-9'. Interacts with SUMO ubiquitin-like proteins (SUMO1, SUNO2 and SUMO3), with a preference for SUMO2 and SUMO3. Interacts with SP1, ATF7 and ZHX1. Interacts with the general transcription machinery, including ERCC2, ERCC3, GTF2E1, GTF2E2 and POLR2A. In terms of tissue distribution, ubiquitously expressed at all stages studied.

The protein localises to the nucleus. Recruiter that couples transcriptional factors to general transcription apparatus and thereby modulates transcription regulation and chromatin formation. Can both act as an activator or a repressor depending on the context. Required for HUSH-mediated heterochromatin formation and gene silencing. Mediates MBD1-dependent transcriptional repression, probably by recruiting complexes containing SETDB1. Stabilizes SETDB1, is required to stimulate histone methyltransferase activity of SETDB1 and facilitates the conversion of dimethylated to trimethylated H3 'Lys-9' (H3K9me3). The complex formed with MBD1 and SETDB1 represses transcription and couples DNA methylation and histone H3 'Lys-9' trimethylation (H3K9me3). Facilitates telomerase TERT and TERC gene expression by SP1 in cancer cells. The sequence is that of Activating transcription factor 7-interacting protein 1 (Atf7ip) from Mus musculus (Mouse).